The following is a 67-amino-acid chain: Conotoxin ArMLCL-012 (67 aa).

Residues 1 to 19 (MLCLPVFIILLLLASPAAS) form the signal peptide. Residues 20–45 (NPLEKRIQSDLIRAALEDADTKNDPR) constitute a propeptide that is removed on maturation. A Cysteine amide modification is found at Cys-64.

The protein belongs to the conotoxin T superfamily. In terms of processing, contains 2 disulfide bonds that can be either 'C1-C3, C2-C4' or 'C1-C4, C2-C3', since these disulfide connectivities have been observed for conotoxins with cysteine framework V (for examples, see AC P0DQQ7 and AC P81755). In terms of tissue distribution, expressed by the venom duct.

Its subcellular location is the secreted. In Conus arenatus (Sand-dusted cone), this protein is Conotoxin ArMLCL-012.